A 238-amino-acid polypeptide reads, in one-letter code: Purine nucleoside phosphorylase DeoD-type (238 aa).

Histidine 4 is an a purine D-ribonucleoside binding site. Phosphate-binding positions include glycine 20, arginine 24, arginine 43, and 87–90 (RVGS). A purine D-ribonucleoside is bound by residues 179 to 181 (EME) and 203 to 204 (SD). The active-site Proton donor is aspartate 204.

Belongs to the PNP/UDP phosphorylase family. Homohexamer; trimer of homodimers.

The catalysed reaction is a purine D-ribonucleoside + phosphate = a purine nucleobase + alpha-D-ribose 1-phosphate. It catalyses the reaction a purine 2'-deoxy-D-ribonucleoside + phosphate = a purine nucleobase + 2-deoxy-alpha-D-ribose 1-phosphate. Its function is as follows. Catalyzes the reversible phosphorolytic breakdown of the N-glycosidic bond in the beta-(deoxy)ribonucleoside molecules, with the formation of the corresponding free purine bases and pentose-1-phosphate. The protein is Purine nucleoside phosphorylase DeoD-type of Actinobacillus succinogenes (strain ATCC 55618 / DSM 22257 / CCUG 43843 / 130Z).